A 568-amino-acid polypeptide reads, in one-letter code: Cytochrome P450 monooxygenase 41 (568 aa).

The helical transmembrane segment at 21–41 threads the bilayer; the sequence is LTSLVPLILSVMVCLIATVTI. Asparagine 321 and asparagine 377 each carry an N-linked (GlcNAc...) asparagine glycan. Cysteine 514 contributes to the heme binding site.

This sequence belongs to the cytochrome P450 family. Heme is required as a cofactor.

The protein resides in the membrane. It functions in the pathway secondary metabolite biosynthesis. Functionally, cytochrome P450 monooxygenase that is able to use 3,5-dimethoxy-trans-stilbene and 3,5,4'-trimethoxy-trans-stilbene as substrates for oxidation. The polypeptide is Cytochrome P450 monooxygenase 41 (Postia placenta (strain ATCC 44394 / Madison 698-R) (Brown rot fungus)).